Consider the following 152-residue polypeptide: Cell division protein SepF (152 aa).

This sequence belongs to the SepF family. As to quaternary structure, homodimer. Interacts with FtsZ.

It is found in the cytoplasm. Its function is as follows. Cell division protein that is part of the divisome complex and is recruited early to the Z-ring. Probably stimulates Z-ring formation, perhaps through the cross-linking of FtsZ protofilaments. Its function overlaps with FtsA. The sequence is that of Cell division protein SepF from Listeria monocytogenes serotype 4b (strain CLIP80459).